A 288-amino-acid chain; its full sequence is Polyprenyl transferase eriF (288 aa).

The next 6 helical transmembrane spans lie at 24–44, 51–71, 101–121, 145–165, 215–235, and 268–288; these read ASII…TLPL, YIFL…LNQV, IAAF…LPET, CIAM…AISP, FIIT…GGIF, and FYTY…HGLI.

Belongs to the UbiA prenyltransferase family. Mg(2+) serves as cofactor.

The protein resides in the membrane. Its function is as follows. Polyprenyl transferase; part of the gene cluster that mediates the biosynthesis of erinacines, cyathane-xylosides that show unique biological activities, including leishmanicidal activity, stimulating activity for nerve growth-factor synthesis, and agonistic activity toward the kappa opioid receptor. The role of eriF within the pathway has still to be determined. The first step of the erinacines biosynthesis pathway is catalyzed by the geranylgeranyl diphosphate (GGPP) synthase eriE via conversion of farnesyl pyrophosphate and isopentyl pyrophosphate into geranylgeranyl pyrophosphate (GGPP). GGPP is then substrate of the diterpene cyclase eriG for the production of cyatha-3,12-diene. The cytochrome P450 monooxygenase eriI then hydroxylates cyatha-3,12-diene at C-14 of the seven-membered ring to produce erinacol, which is further hydroxylated at C-15 by the cytochrome P450 monooxygenase eriC to yield cyathadiol. The cytochrome P450 monooxygenase eriA then catalyzes C-11 hydroxylation in the presence of the short chain dehydrogenase/reductase (SDR) eriH, which leads to the production of cyathatriol. The acetyltransferase eriL converts cyathatriol into 11-O-acetyl-cyathatriol. The SDR eriH catalyzes further oxidation of 11-O-acetyl-cyathatriol into 1-O-acetylcyathin A3. Finally, the glycosyl transferase eriJ tranfers xylose from UDP-xylose onto C-14 of 11-O-acetyl-cyathatriol to form eracine Q. EriJ is also able to convert 11-O-acetyl-cyathatriol to eracine Q2 by using UDP-D-glucose as cosubstrate, but at a lower rate. The protein is Polyprenyl transferase eriF of Hericium erinaceus (Lion's mane mushroom).